A 147-amino-acid polypeptide reads, in one-letter code: Deoxyuridine 5'-triphosphate nucleotidohydrolase (147 aa).

Arg24 is a Mg(2+) binding site. DUTP-binding positions include 68-70 (PRS), 82-85 (GVID), Tyr88, Gly93, Ile95, and Arg111.

Belongs to the dUTPase family. The cofactor is Mg(2+).

The catalysed reaction is dUTP + H2O = dUMP + diphosphate + H(+). In terms of biological role, this enzyme is involved in nucleotide metabolism: it produces dUMP, the immediate precursor of thymidine nucleotides and it decreases the intracellular concentration of dUTP so that uracil cannot be incorporated into DNA. The polypeptide is Deoxyuridine 5'-triphosphate nucleotidohydrolase (OPG046) (Bos taurus (Bovine)).